Consider the following 112-residue polypeptide: Citrate synthase (112 aa).

Residues H39 and D97 contribute to the active site.

It belongs to the citrate synthase family.

It carries out the reaction oxaloacetate + acetyl-CoA + H2O = citrate + CoA + H(+). The protein operates within carbohydrate metabolism; tricarboxylic acid cycle; isocitrate from oxaloacetate: step 1/2. The sequence is that of Citrate synthase (gltA) from Bartonella vinsonii subsp. berkhoffii.